Here is a 651-residue protein sequence, read N- to C-terminus: Acetyl-coenzyme A synthetase (651 aa).

CoA contacts are provided by residues 189–192 (RGGK), Thr311, and Asn335. ATP is bound by residues 387–389 (GEP), 411–416 (DTWWQT), Asp500, and Arg515. A CoA-binding site is contributed by Ser523. Arg526 contacts ATP. Residues Val537, His539, and Val542 each contribute to the Mg(2+) site. Arg586 contacts CoA. Lys611 bears the N6-acetyllysine mark.

It belongs to the ATP-dependent AMP-binding enzyme family. The cofactor is Mg(2+). Acetylated. Deacetylation by the SIR2-homolog deacetylase activates the enzyme.

The catalysed reaction is acetate + ATP + CoA = acetyl-CoA + AMP + diphosphate. In terms of biological role, catalyzes the conversion of acetate into acetyl-CoA (AcCoA), an essential intermediate at the junction of anabolic and catabolic pathways. AcsA undergoes a two-step reaction. In the first half reaction, AcsA combines acetate with ATP to form acetyl-adenylate (AcAMP) intermediate. In the second half reaction, it can then transfer the acetyl group from AcAMP to the sulfhydryl group of CoA, forming the product AcCoA. In Brucella anthropi (strain ATCC 49188 / DSM 6882 / CCUG 24695 / JCM 21032 / LMG 3331 / NBRC 15819 / NCTC 12168 / Alc 37) (Ochrobactrum anthropi), this protein is Acetyl-coenzyme A synthetase.